The primary structure comprises 128 residues: Sirohydrochlorin cobaltochelatase (128 aa).

His9 acts as the Proton acceptor in catalysis. Residue His9 participates in Co(2+) binding. Substrate is bound by residues Lys43 and 68–73; that span reads FATGTH. His73 provides a ligand contact to Co(2+).

It belongs to the CbiX family. CbiXS subfamily. In terms of assembly, homotetramer; dimer of dimers.

The enzyme catalyses Co-sirohydrochlorin + 2 H(+) = sirohydrochlorin + Co(2+). Its pathway is cofactor biosynthesis; adenosylcobalamin biosynthesis; cob(II)yrinate a,c-diamide from sirohydrochlorin (anaerobic route): step 1/10. In terms of biological role, catalyzes the insertion of Co(2+) into sirohydrochlorin as part of the anaerobic pathway to cobalamin biosynthesis. This Saccharolobus islandicus (strain Y.N.15.51 / Yellowstone #2) (Sulfolobus islandicus) protein is Sirohydrochlorin cobaltochelatase.